The sequence spans 378 residues: GDP-mannose 3,5-epimerase 1 (378 aa).

NAD(+) is bound by residues 36–62 (GAGGFIGSHIARRLKSEGHYIIASDWK), D60, and D80. Substrate contacts are provided by residues G105 and 145-147 (SAC). Positions 175 and 179 each coordinate NAD(+). The active-site Proton acceptor is the Y175. Residues N204, 217–219 (EKA), K226, 242–244 (QTR), R307, and S357 each bind substrate.

The protein belongs to the NAD(P)-dependent epimerase/dehydratase family. Homodimer. NAD(+) serves as cofactor.

It carries out the reaction GDP-alpha-D-mannose = GDP-beta-L-gulose. It catalyses the reaction GDP-beta-L-gulose = GDP-beta-L-galactose. It functions in the pathway cofactor biosynthesis; L-ascorbate biosynthesis via GDP-alpha-D-mannose pathway; L-ascorbate from GDP-alpha-D-mannose: step 1/5. Strongly activated by NAD. Activated by NADP. Slightly activated by NADH and NADPH. Inhibited by GDP. In terms of biological role, catalyzes a reversible epimerization of GDP-D-mannose that precedes the committed step in the biosynthesis of vitamin C (L-ascorbate), resulting in the hydrolysis of the highly energetic glycosyl-pyrophosphoryl linkage. Able to catalyze 2 distinct epimerization reactions and can release both GDP-L-galactose and GDP-L-gulose from GDP-mannose. This chain is GDP-mannose 3,5-epimerase 1 (GME-1), found in Oryza sativa subsp. japonica (Rice).